The following is a 535-amino-acid chain: BAR/IMD domain-containing adapter protein 2 (535 aa).

In terms of domain architecture, IMD spans 1–250; sequence MSLSRSEEMH…VQLMQQMANS (250 aa). A coiled-coil region spans residues 88 to 153; the sequence is NQLEETLKSF…LRKKSQGSKN (66 aa). Phosphoserine is present on residues Ser262, Ser324, Ser326, and Ser337. The tract at residues 299 to 370 is disordered; the sequence is VMNGVAGPDS…TLPRSSSMAA (72 aa). The segment covering 321–335 has biased composition (low complexity); it reads QPKSLSPPQSQSKLS. Thr341 carries the phosphothreonine modification. At Ser347 the chain carries Phosphoserine. Residues 349–368 show a composition bias toward polar residues; it reads TPKNSYATTENKTLPRSSSM. Position 361 is a phosphothreonine (Thr361). 4 positions are modified to phosphoserine: Ser367, Ser385, Ser396, and Ser455. One can recognise an SH3 domain in the interval 375-438; the sequence is NGRMRVKAIF…PFSYTRVLDS (64 aa). Residues 445-477 form a disordered region; the sequence is HMSLQQGKSSSTGNLLDKDDLALPPPDYGTSSR. The span at 447-458 shows a compositional bias: polar residues; that stretch reads SLQQGKSSSTGN.

Homodimer. Interacts with CDC42 and RAC1 that have been activated by GTP binding. Binds DIAPH1. Interacts with ATN1, ADGRB1, SHANK1, SHANK2, SHANK3, TIAM1, WASF1 and WASF2. Interacts with ENAH after recruitment of CDC42. Interacts with EPS8. In terms of processing, phosphorylated on tyrosine residues by INSR in response to insulin treatment. Detected in liver, brain, olfactory bulb, brain cortex, caudate putamen, hypothalamus and cerebellum.

It is found in the cytoplasm. Its subcellular location is the membrane. The protein resides in the cell projection. It localises to the filopodium. The protein localises to the ruffle. It is found in the cytoskeleton. Adapter protein that links membrane-bound small G-proteins to cytoplasmic effector proteins. Necessary for CDC42-mediated reorganization of the actin cytoskeleton and for RAC1-mediated membrane ruffling. Involved in the regulation of the actin cytoskeleton by WASF family members and the Arp2/3 complex. Plays a role in neurite growth. Acts syngeristically with ENAH to promote filipodia formation. Plays a role in the reorganization of the actin cytoskeleton in response to bacterial infection. Participates in actin bundling when associated with EPS8, promoting filopodial protrusions. The chain is BAR/IMD domain-containing adapter protein 2 (Baiap2) from Mus musculus (Mouse).